The primary structure comprises 125 residues: Large ribosomal subunit protein bL19 (125 aa).

This sequence belongs to the bacterial ribosomal protein bL19 family.

This protein is located at the 30S-50S ribosomal subunit interface and may play a role in the structure and function of the aminoacyl-tRNA binding site. The chain is Large ribosomal subunit protein bL19 from Ehrlichia chaffeensis (strain ATCC CRL-10679 / Arkansas).